A 296-amino-acid chain; its full sequence is Phosphoribosylaminoimidazole-succinocarboxamide synthase (296 aa).

Belongs to the SAICAR synthetase family.

The enzyme catalyses 5-amino-1-(5-phospho-D-ribosyl)imidazole-4-carboxylate + L-aspartate + ATP = (2S)-2-[5-amino-1-(5-phospho-beta-D-ribosyl)imidazole-4-carboxamido]succinate + ADP + phosphate + 2 H(+). Its pathway is purine metabolism; IMP biosynthesis via de novo pathway; 5-amino-1-(5-phospho-D-ribosyl)imidazole-4-carboxamide from 5-amino-1-(5-phospho-D-ribosyl)imidazole-4-carboxylate: step 1/2. The polypeptide is Phosphoribosylaminoimidazole-succinocarboxamide synthase (Trichlorobacter lovleyi (strain ATCC BAA-1151 / DSM 17278 / SZ) (Geobacter lovleyi)).